We begin with the raw amino-acid sequence, 398 residues long: Protochlorophyllide reductase, chloroplastic (398 aa).

The transit peptide at 1-64 (MALQAASLVS…NQQIGAIRAQ (64 aa)) directs the protein to the chloroplast.

The protein belongs to the short-chain dehydrogenases/reductases (SDR) family. POR subfamily.

It localises to the plastid. Its subcellular location is the chloroplast. It carries out the reaction chlorophyllide a + NADP(+) = protochlorophyllide a + NADPH + H(+). It participates in porphyrin-containing compound metabolism; chlorophyll biosynthesis. Its function is as follows. Phototransformation of protochlorophyllide (Pchlide) to chlorophyllide (Chlide). This is Protochlorophyllide reductase, chloroplastic (PORA) from Cucumis sativus (Cucumber).